Consider the following 177-residue polypeptide: Large ribosomal subunit protein uL6 (177 aa).

The protein belongs to the universal ribosomal protein uL6 family. Part of the 50S ribosomal subunit.

Its function is as follows. This protein binds to the 23S rRNA, and is important in its secondary structure. It is located near the subunit interface in the base of the L7/L12 stalk, and near the tRNA binding site of the peptidyltransferase center. The sequence is that of Large ribosomal subunit protein uL6 from Citrobacter koseri (strain ATCC BAA-895 / CDC 4225-83 / SGSC4696).